The chain runs to 76 residues: UPF0154 protein LCA_1273 (76 aa).

Residues 3–23 (IGIGVLIFVIGALLGAVAGFF) traverse the membrane as a helical segment. Positions 55–76 (PSEKKLNQMMSSMKAQQKRSKK) are disordered.

It belongs to the UPF0154 family.

Its subcellular location is the cell membrane. The sequence is that of UPF0154 protein LCA_1273 from Latilactobacillus sakei subsp. sakei (strain 23K) (Lactobacillus sakei subsp. sakei).